Here is a 282-residue protein sequence, read N- to C-terminus: DegV domain-containing protein M6_Spy0690 (282 aa).

In terms of domain architecture, DegV spans 3–280 (LAVITDSTAT…EGAIAFGVTP (278 aa)). The hexadecanoate site is built by Thr-61 and Ser-94.

Functionally, may bind long-chain fatty acids, such as palmitate, and may play a role in lipid transport or fatty acid metabolism. This is DegV domain-containing protein M6_Spy0690 from Streptococcus pyogenes serotype M6 (strain ATCC BAA-946 / MGAS10394).